Consider the following 294-residue polypeptide: Elongation factor Ts (294 aa).

The tract at residues 82–85 is involved in Mg(2+) ion dislocation from EF-Tu; sequence TDFV.

This sequence belongs to the EF-Ts family.

The protein localises to the cytoplasm. In terms of biological role, associates with the EF-Tu.GDP complex and induces the exchange of GDP to GTP. It remains bound to the aminoacyl-tRNA.EF-Tu.GTP complex up to the GTP hydrolysis stage on the ribosome. The chain is Elongation factor Ts from Psychrobacter arcticus (strain DSM 17307 / VKM B-2377 / 273-4).